The following is a 131-amino-acid chain: D-ribose pyranase (131 aa).

His-20 functions as the Proton donor in the catalytic mechanism. Residues Asp-28, His-98, and 120 to 122 each bind substrate; that span reads YAN.

It belongs to the RbsD / FucU family. RbsD subfamily. Homodecamer.

It is found in the cytoplasm. It catalyses the reaction beta-D-ribopyranose = beta-D-ribofuranose. It participates in carbohydrate metabolism; D-ribose degradation; D-ribose 5-phosphate from beta-D-ribopyranose: step 1/2. In terms of biological role, catalyzes the interconversion of beta-pyran and beta-furan forms of D-ribose. This chain is D-ribose pyranase, found in Bacillus anthracis (strain A0248).